Reading from the N-terminus, the 428-residue chain is Enolase 1 (428 aa).

Glutamine 167 is a binding site for (2R)-2-phosphoglycerate. The Proton donor role is filled by glutamate 209. Residues aspartate 246, glutamate 288, and aspartate 315 each contribute to the Mg(2+) site. (2R)-2-phosphoglycerate-binding residues include lysine 340, arginine 369, serine 370, and lysine 391. Residue lysine 340 is the Proton acceptor of the active site.

Belongs to the enolase family. As to quaternary structure, component of the RNA degradosome, a multiprotein complex involved in RNA processing and mRNA degradation. It depends on Mg(2+) as a cofactor.

Its subcellular location is the cytoplasm. The protein localises to the secreted. The protein resides in the cell surface. It carries out the reaction (2R)-2-phosphoglycerate = phosphoenolpyruvate + H2O. It functions in the pathway carbohydrate degradation; glycolysis; pyruvate from D-glyceraldehyde 3-phosphate: step 4/5. Functionally, catalyzes the reversible conversion of 2-phosphoglycerate (2-PG) into phosphoenolpyruvate (PEP). It is essential for the degradation of carbohydrates via glycolysis. The sequence is that of Enolase 1 from Pseudomonas syringae pv. tomato (strain ATCC BAA-871 / DC3000).